A 263-amino-acid polypeptide reads, in one-letter code: Endonuclease 8 (263 aa).

Residue proline 2 is the Schiff-base intermediate with DNA of the active site. Glutamate 3 functions as the Proton donor in the catalytic mechanism. Residue lysine 53 is the Proton donor; for beta-elimination activity of the active site. DNA contacts are provided by glutamine 70, arginine 125, and asparagine 169. Residues 229 to 263 (KVFHRDGERCERCGGVIEKTTLSSRPFYWCPGCQH) form an FPG-type zinc finger. Arginine 253 functions as the Proton donor; for delta-elimination activity in the catalytic mechanism.

This sequence belongs to the FPG family. Requires Zn(2+) as cofactor.

It catalyses the reaction 2'-deoxyribonucleotide-(2'-deoxyribose 5'-phosphate)-2'-deoxyribonucleotide-DNA = a 3'-end 2'-deoxyribonucleotide-(2,3-dehydro-2,3-deoxyribose 5'-phosphate)-DNA + a 5'-end 5'-phospho-2'-deoxyribonucleoside-DNA + H(+). Involved in base excision repair of DNA damaged by oxidation or by mutagenic agents. Acts as a DNA glycosylase that recognizes and removes damaged bases. Has a preference for oxidized pyrimidines, such as thymine glycol, 5,6-dihydrouracil and 5,6-dihydrothymine. Has AP (apurinic/apyrimidinic) lyase activity and introduces nicks in the DNA strand. Cleaves the DNA backbone by beta-delta elimination to generate a single-strand break at the site of the removed base with both 3'- and 5'-phosphates. This is Endonuclease 8 from Klebsiella pneumoniae (strain 342).